The sequence spans 660 residues: Protein translocase subunit SecA 2 (660 aa).

ATP is bound by residues Q113, 131–135 (GEGKT), and D539.

The protein belongs to the SecA family. Monomer and homodimer. Part of the essential Sec protein translocation apparatus which comprises SecA, SecYEG and auxiliary proteins SecDF-YajC and YidC.

The protein localises to the cell inner membrane. It is found in the cytoplasm. The catalysed reaction is ATP + H2O + cellular proteinSide 1 = ADP + phosphate + cellular proteinSide 2.. Functionally, part of the Sec protein translocase complex. Interacts with the SecYEG preprotein conducting channel. Has a central role in coupling the hydrolysis of ATP to the transfer of proteins into and across the cell membrane, serving both as a receptor for the preprotein-SecB complex and as an ATP-driven molecular motor driving the stepwise translocation of polypeptide chains across the membrane. The chain is Protein translocase subunit SecA 2 from Bordetella avium (strain 197N).